A 1202-amino-acid chain; its full sequence is DNA-directed RNA polymerase subunit beta (1202 aa).

Positions 1154–1202 (NMDEDDDEVVNVDALAKYAEEHKADDKKNEEENKSEATSTTTDDKTNQN) are disordered. Residues 1171-1188 (YAEEHKADDKKNEEENKS) are compositionally biased toward basic and acidic residues.

The protein belongs to the RNA polymerase beta chain family. As to quaternary structure, the RNAP catalytic core consists of 2 alpha, 1 beta, 1 beta' and 1 omega subunit. When a sigma factor is associated with the core the holoenzyme is formed, which can initiate transcription.

It catalyses the reaction RNA(n) + a ribonucleoside 5'-triphosphate = RNA(n+1) + diphosphate. In terms of biological role, DNA-dependent RNA polymerase catalyzes the transcription of DNA into RNA using the four ribonucleoside triphosphates as substrates. The sequence is that of DNA-directed RNA polymerase subunit beta from Limosilactobacillus reuteri (strain DSM 20016) (Lactobacillus reuteri).